The chain runs to 388 residues: tRNA (guanine(26)-N(2))-dimethyltransferase (388 aa).

The Trm1 methyltransferase domain maps to R4–I383. R41, R78, D94, and A123 together coordinate S-adenosyl-L-methionine. Residues C251, C254, C271, and C274 each coordinate Zn(2+).

The protein belongs to the class I-like SAM-binding methyltransferase superfamily. Trm1 family.

The catalysed reaction is guanosine(26) in tRNA + 2 S-adenosyl-L-methionine = N(2)-dimethylguanosine(26) in tRNA + 2 S-adenosyl-L-homocysteine + 2 H(+). Dimethylates a single guanine residue at position 26 of a number of tRNAs using S-adenosyl-L-methionine as donor of the methyl groups. In Methanosarcina acetivorans (strain ATCC 35395 / DSM 2834 / JCM 12185 / C2A), this protein is tRNA (guanine(26)-N(2))-dimethyltransferase.